Reading from the N-terminus, the 232-residue chain is MVTVLMHDMFHAGVHFGHQTRYWNPRMKPFIFGVRNKIHIINLEQTAPMFNNALFELNKIASRKGKILFVGTKRAASEAIKEAARSCDQFFVNHRWLGGMLTNWKTVRQSIKHLKELETQSQDGTLDKLTKKEAIICNRKLEKLEKSLGGIKDLGGLPDALFVIDAEREKIAVKEANNLGIPVFAVVDTNTDPNGIDFIIPGNDDAIRAINLYLTAVAHAISEGHQKNALEI.

Belongs to the universal ribosomal protein uS2 family.

In Baumannia cicadellinicola subsp. Homalodisca coagulata, this protein is Small ribosomal subunit protein uS2.